A 532-amino-acid polypeptide reads, in one-letter code: Chondroitin sulfate N-acetylgalactosaminyltransferase 1 (532 aa).

Over 1–14 the chain is Cytoplasmic; it reads MMMVRRGLLAWISR. The chain crosses the membrane as a helical; Signal-anchor for type II membrane protein span at residues 15–35; that stretch reads VVVLLVLLCCAISVLYMLACT. Over 36-532 the chain is Lumenal; it reads PKGDEEQLAL…QKQKTSSKKT (497 aa). Residues 57-100 adopt a coiled-coil conformation; that stretch reads YQAVLQEWEEQHRNYVSSLKRQIAQLKEELQERSEQLRNGQYQA. 2 N-linked (GlcNAc...) asparagine glycosylation sites follow: N315 and N324. Residues D360 and H477 each contribute to the a divalent metal cation site.

Belongs to the chondroitin N-acetylgalactosaminyltransferase family. In terms of processing, N-glycosylated. In terms of tissue distribution, ubiquitous, with the highest levels in placenta, thyroid, bladder, prostate and adrenal gland. Detected at low levels in the other tissues examined.

The protein resides in the golgi apparatus. Its subcellular location is the golgi stack membrane. The enzyme catalyses 3-O-(beta-D-GlcA-(1-&gt;3)-beta-D-Gal-(1-&gt;3)-beta-D-Gal-(1-&gt;4)-beta-D-Xyl)-L-seryl-[protein] + UDP-N-acetyl-alpha-D-galactosamine = 3-O-(beta-D-GalNAc-(1-&gt;4)-beta-D-GlcA-(1-&gt;3)-beta-D-Gal-(1-&gt;3)-beta-D-Gal-(1-&gt;4)-beta-D-Xyl)-L-seryl-[protein] + UDP + H(+). Transfers 1,4-N-acetylgalactosamine (GalNAc) from UDP-GalNAc to the non-reducing end of glucuronic acid (GlcUA). Required for addition of the first GalNAc to the core tetrasaccharide linker and for elongation of chondroitin chains. Important role in chondroitin chain biosynthesis in cartilage formation and subsequent endochondral ossification. Moreover, is involved in the metabolism of aggrecan. The polypeptide is Chondroitin sulfate N-acetylgalactosaminyltransferase 1 (Homo sapiens (Human)).